The primary structure comprises 368 residues: Glutamate 5-kinase (368 aa).

Lys18 contributes to the ATP binding site. Residues Ser58, Asp145, and Asn157 each coordinate substrate. Residues 177-178 (SD) and 218-224 (TGGMASK) each bind ATP. The 79-residue stretch at 280–358 (AGSLTLDEGA…SELPGELRRP (79 aa)) folds into the PUA domain.

This sequence belongs to the glutamate 5-kinase family.

It localises to the cytoplasm. The catalysed reaction is L-glutamate + ATP = L-glutamyl 5-phosphate + ADP. The protein operates within amino-acid biosynthesis; L-proline biosynthesis; L-glutamate 5-semialdehyde from L-glutamate: step 1/2. In terms of biological role, catalyzes the transfer of a phosphate group to glutamate to form L-glutamate 5-phosphate. This chain is Glutamate 5-kinase, found in Mycobacterium ulcerans (strain Agy99).